The chain runs to 632 residues: Phosphomethylpyrimidine synthase (632 aa).

Over residues 1–23 the composition is skewed to polar residues; that stretch reads MNIRSNPQQTVPAVTTGPLSSSR. The disordered stretch occupies residues 1 to 26; it reads MNIRSNPQQTVPAVTTGPLSSSRKIF. Residues Asn221, Met250, Tyr279, His315, 335–337, 376–379, and Glu415 each bind substrate; these read SRG and DGLR. His419 contributes to the Zn(2+) binding site. Residue Tyr442 coordinates substrate. His483 contacts Zn(2+). Residues Cys563, Cys566, and Cys571 each contribute to the [4Fe-4S] cluster site.

The protein belongs to the ThiC family. Homodimer. [4Fe-4S] cluster is required as a cofactor.

It catalyses the reaction 5-amino-1-(5-phospho-beta-D-ribosyl)imidazole + S-adenosyl-L-methionine = 4-amino-2-methyl-5-(phosphooxymethyl)pyrimidine + CO + 5'-deoxyadenosine + formate + L-methionine + 3 H(+). Its pathway is cofactor biosynthesis; thiamine diphosphate biosynthesis. Functionally, catalyzes the synthesis of the hydroxymethylpyrimidine phosphate (HMP-P) moiety of thiamine from aminoimidazole ribotide (AIR) in a radical S-adenosyl-L-methionine (SAM)-dependent reaction. The polypeptide is Phosphomethylpyrimidine synthase (Bradyrhizobium diazoefficiens (strain JCM 10833 / BCRC 13528 / IAM 13628 / NBRC 14792 / USDA 110)).